Reading from the N-terminus, the 121-residue chain is UPF0102 protein AAur_2443 (121 aa).

Belongs to the UPF0102 family.

In Paenarthrobacter aurescens (strain TC1), this protein is UPF0102 protein AAur_2443.